A 468-amino-acid chain; its full sequence is Argininosuccinate lyase (468 aa).

It belongs to the lyase 1 family. Argininosuccinate lyase subfamily.

The protein localises to the cytoplasm. It carries out the reaction 2-(N(omega)-L-arginino)succinate = fumarate + L-arginine. The protein operates within amino-acid biosynthesis; L-arginine biosynthesis; L-arginine from L-ornithine and carbamoyl phosphate: step 3/3. The sequence is that of Argininosuccinate lyase from Zymomonas mobilis subsp. mobilis (strain ATCC 31821 / ZM4 / CP4).